Consider the following 385-residue polypeptide: Putative 8-amino-7-oxononanoate synthase (385 aa).

Arg-22 lines the substrate pocket. 109-110 (GY) is a binding site for pyridoxal 5'-phosphate. His-134 is a substrate binding site. Pyridoxal 5'-phosphate contacts are provided by residues Ser-182, 207 to 210 (DEAH), and 238 to 241 (TLSK). Lys-241 carries the N6-(pyridoxal phosphate)lysine modification. A substrate-binding site is contributed by Thr-353.

It belongs to the class-II pyridoxal-phosphate-dependent aminotransferase family. BioF subfamily. Homodimer. Pyridoxal 5'-phosphate is required as a cofactor.

The catalysed reaction is 6-carboxyhexanoyl-[ACP] + L-alanine + H(+) = (8S)-8-amino-7-oxononanoate + holo-[ACP] + CO2. It participates in cofactor biosynthesis; biotin biosynthesis. Functionally, catalyzes the decarboxylative condensation of pimeloyl-[acyl-carrier protein] and L-alanine to produce 8-amino-7-oxononanoate (AON), [acyl-carrier protein], and carbon dioxide. The sequence is that of Putative 8-amino-7-oxononanoate synthase (bioF) from Microcystis aeruginosa (strain NIES-843 / IAM M-2473).